Here is a 526-residue protein sequence, read N- to C-terminus: MLKHFQRLGGALFAPVLLFPFAGLVVALTIILKNPDFVGELANTNGTFYKMITVIEEGGWTVFRQLPLIFAIGLPIGLAKKAHPRACLAVLATYLTYNYFISAILTFWGPSFGVDFTQNVGGVSGLTTIAGIKTLDTSIVGAIVISGITIYIHNKFFDTKLPDFLGTFQGTTLVSAIAFVVMIPCAYITCLVWPKIQMGISSLQALMVTSGTFGVWLYTFLERILIPTGLHHFIYGPFIFGPAVVDTGIQVAWAENLLNFANSTQPLKELFPQGGFALHGNSKIFGCIGIALAMYKTARPEKKKIVSGLLIPAALTAALVGITEPLEFTFLFIAPFLFVVHAVLAATMAAVMYAFGVVKYGSGIIEIAALNWLPLMKNHSGVMFTQLAIGVVFIGIHYLVFKFLIEKYNVKTSGREDEEEETKLYTKADWKAKNGEGKETNSSDLYSGKAKAFLEAFGGKDNIEQVNNCATRLRISVKDEKKVGPDIQFKAAGAHGVVRNGKAFQVIVGLSVPQVRESFENLMEQN.

The PTS EIIC type-1 domain maps to 1–417 (MLKHFQRLGG…YNVKTSGRED (417 aa)). 12 consecutive transmembrane segments (helical) span residues 12 to 32 (LFAP…TIIL), 59 to 79 (GWTV…IGLA), 88 to 108 (LAVL…LTFW), 132 to 152 (IKTL…TIYI), 173 to 193 (LVSA…CLVW), 200 to 220 (ISSL…LYTF), 224 to 244 (ILIP…GPAV), 274 to 294 (GGFA…ALAM), 305 to 325 (IVSG…ITEP), 330 to 350 (FLFI…TMAA), 355 to 375 (FGVV…WLPL), and 381 to 401 (GVMF…YLVF). The region spanning 447-526 (SGKAKAFLEA…ESFENLMEQN (80 aa)) is the PTS EIIB type-1 domain. Residue Cys-469 is the Phosphocysteine intermediate; for EIIB activity of the active site.

It is found in the cell membrane. In terms of biological role, the phosphoenolpyruvate-dependent sugar phosphotransferase system (sugar PTS), a major carbohydrate active -transport system, catalyzes the phosphorylation of incoming sugar substrates concomitantly with their translocation across the cell membrane. This system is involved in alpha-glucoside transport. This chain is PTS system alpha-glucoside-specific EIICB component (malB), found in Fusobacterium mortiferum.